The primary structure comprises 103 residues: Small ribosomal subunit protein uS10 (103 aa).

It belongs to the universal ribosomal protein uS10 family. As to quaternary structure, part of the 30S ribosomal subunit.

Involved in the binding of tRNA to the ribosomes. This is Small ribosomal subunit protein uS10 from Neorickettsia sennetsu (strain ATCC VR-367 / Miyayama) (Ehrlichia sennetsu).